We begin with the raw amino-acid sequence, 279 residues long: Tryptophan 2,3-dioxygenase (279 aa).

Substrate is bound by residues 48–52 (FIVIH), Tyr-110, and Arg-114. His-237 contributes to the heme binding site. Thr-251 lines the substrate pocket.

This sequence belongs to the tryptophan 2,3-dioxygenase family. Homotetramer. Requires heme as cofactor.

The catalysed reaction is L-tryptophan + O2 = N-formyl-L-kynurenine. Its pathway is amino-acid degradation; L-tryptophan degradation via kynurenine pathway; L-kynurenine from L-tryptophan: step 1/2. In terms of biological role, heme-dependent dioxygenase that catalyzes the oxidative cleavage of the L-tryptophan (L-Trp) pyrrole ring and converts L-tryptophan to N-formyl-L-kynurenine. Catalyzes the oxidative cleavage of the indole moiety. The chain is Tryptophan 2,3-dioxygenase from Bacillus thuringiensis subsp. konkukian (strain 97-27).